The chain runs to 906 residues: Protein translocase subunit SecA (906 aa).

Residues Gln86, 104–108 (GEGKT), and Asp499 contribute to the ATP site. Residues 862–885 (KPVVSRIDPKDRNPDDPTSWGRVS) are disordered. Zn(2+) is bound by residues Cys890, Cys892, Cys901, and His902.

It belongs to the SecA family. In terms of assembly, monomer and homodimer. Part of the essential Sec protein translocation apparatus which comprises SecA, SecYEG and auxiliary proteins SecDF-YajC and YidC. Zn(2+) is required as a cofactor.

Its subcellular location is the cell inner membrane. It localises to the cytoplasm. It catalyses the reaction ATP + H2O + cellular proteinSide 1 = ADP + phosphate + cellular proteinSide 2.. Part of the Sec protein translocase complex. Interacts with the SecYEG preprotein conducting channel. Has a central role in coupling the hydrolysis of ATP to the transfer of proteins into and across the cell membrane, serving both as a receptor for the preprotein-SecB complex and as an ATP-driven molecular motor driving the stepwise translocation of polypeptide chains across the membrane. This Rickettsia massiliae (strain Mtu5) protein is Protein translocase subunit SecA.